We begin with the raw amino-acid sequence, 150 residues long: MIQKSFVMMKPDAVQRRLMGKILSRFEEKGLQIVAVKLMQIDEDLAKTHYGEHADKPFFGSLIEYITSSPSLAMVIEGEEAISTIRKLVGATNPLEADLGTIRGDFAMDTGRNIIHASDSPDSAEREINLFFNEDEICDYEIVDNKLIYE.

ATP contacts are provided by Lys10, Phe58, Arg86, Thr92, Arg103, and Asn113. The active-site Pros-phosphohistidine intermediate is His116.

The protein belongs to the NDK family. Requires Mg(2+) as cofactor.

The protein resides in the cytoplasm. It carries out the reaction a 2'-deoxyribonucleoside 5'-diphosphate + ATP = a 2'-deoxyribonucleoside 5'-triphosphate + ADP. The catalysed reaction is a ribonucleoside 5'-diphosphate + ATP = a ribonucleoside 5'-triphosphate + ADP. In terms of biological role, major role in the synthesis of nucleoside triphosphates other than ATP. The ATP gamma phosphate is transferred to the NDP beta phosphate via a ping-pong mechanism, using a phosphorylated active-site intermediate. This Methanobrevibacter smithii (strain ATCC 35061 / DSM 861 / OCM 144 / PS) protein is Nucleoside diphosphate kinase.